The sequence spans 72 residues: Translation initiation factor IF-1 (72 aa).

One can recognise an S1-like domain in the interval 1-72 (MSKDDVIEVE…TRGRIIYRHK (72 aa)).

The protein belongs to the IF-1 family. In terms of assembly, component of the 30S ribosomal translation pre-initiation complex which assembles on the 30S ribosome in the order IF-2 and IF-3, IF-1 and N-formylmethionyl-tRNA(fMet); mRNA recruitment can occur at any time during PIC assembly.

The protein resides in the cytoplasm. In terms of biological role, one of the essential components for the initiation of protein synthesis. Stabilizes the binding of IF-2 and IF-3 on the 30S subunit to which N-formylmethionyl-tRNA(fMet) subsequently binds. Helps modulate mRNA selection, yielding the 30S pre-initiation complex (PIC). Upon addition of the 50S ribosomal subunit IF-1, IF-2 and IF-3 are released leaving the mature 70S translation initiation complex. The polypeptide is Translation initiation factor IF-1 (Carboxydothermus hydrogenoformans (strain ATCC BAA-161 / DSM 6008 / Z-2901)).